The chain runs to 1217 residues: Valine--tRNA ligase (1217 aa).

A GST C-terminal domain is found at 27-155 (NAKQQSQVWQ…ISLCEKMVPV (129 aa)). Residues 293–303 (PNVTGSLHLGH) carry the 'HIGH' region motif. A 'KMSKS' region motif is present at residues 809-813 (KMSKS). Lysine 812 provides a ligand contact to ATP.

It belongs to the class-I aminoacyl-tRNA synthetase family.

It carries out the reaction tRNA(Val) + L-valine + ATP = L-valyl-tRNA(Val) + AMP + diphosphate. The protein is Valine--tRNA ligase (vars1) of Takifugu rubripes (Japanese pufferfish).